We begin with the raw amino-acid sequence, 415 residues long: Putative serpin-Z6C (415 aa).

The tract at residues 357–381 (GTEAAAATAVCLTFASAAPSSRRPA) is RCL.

The protein belongs to the serpin family.

Functionally, probable serine protease inhibitor. This Oryza sativa subsp. japonica (Rice) protein is Putative serpin-Z6C.